The primary structure comprises 141 residues: Hemoglobin subunit alpha-A/A' (141 aa).

The 141-residue stretch at 1–141 (VLSANDKTNV…VGNVLTAKYR (141 aa)) folds into the Globin domain. Histidine 58 is a binding site for O2. A heme b-binding site is contributed by histidine 87.

It belongs to the globin family. As to quaternary structure, heterotetramer of two alpha chains and two beta chains. In terms of tissue distribution, red blood cells.

Functionally, involved in oxygen transport from the lung to the various peripheral tissues. The sequence is that of Hemoglobin subunit alpha-A/A' (HBAA) from Gyps rueppelli (Rueppell's griffon).